A 291-amino-acid polypeptide reads, in one-letter code: Shikimate dehydrogenase (NADP(+)) (291 aa).

Residues 26–28 (SLS) and Ser73 contribute to the shikimate site. Lys77 (proton acceptor) is an active-site residue. Positions 98 and 113 each coordinate shikimate. Residues 137–141 (GAGGA) and Val238 each bind NADP(+). A shikimate-binding site is contributed by Tyr240. Gly261 provides a ligand contact to NADP(+).

Belongs to the shikimate dehydrogenase family. Homodimer.

It carries out the reaction shikimate + NADP(+) = 3-dehydroshikimate + NADPH + H(+). It participates in metabolic intermediate biosynthesis; chorismate biosynthesis; chorismate from D-erythrose 4-phosphate and phosphoenolpyruvate: step 4/7. In terms of biological role, involved in the biosynthesis of the chorismate, which leads to the biosynthesis of aromatic amino acids. Catalyzes the reversible NADPH linked reduction of 3-dehydroshikimate (DHSA) to yield shikimate (SA). The chain is Shikimate dehydrogenase (NADP(+)) from Listeria innocua serovar 6a (strain ATCC BAA-680 / CLIP 11262).